The following is a 210-amino-acid chain: MIHDLMLRWVVTGLFVLTAAECGLAIIAKRRPWTLIVNHGLHFAMAVAMAVMAWPWGARVPTTGPAVFFLLAAVWFGATAVVAVRGTATRGLYGYHGLMMLATAWMYAAMNPRLLPVRSCTEYATEPDGSMPAMDMTAMNMPPNSGSPIWFSAVNWIGTVGFAVAAVFWACRFVMERRQEATQSRLPGSIGQAMMAAGMAMLFFAMLFPV.

6 helical membrane passes run 9–29, 35–55, 64–84, 91–111, 149–169, and 190–210; these read WVVTGLFVLTAAECGLAIIAK, LIVNHGLHFAMAVAMAVMAWP, GPAVFFLLAAVWFGATAVVAV, GLYGYHGLMMLATAWMYAAMN, IWFSAVNWIGTVGFAVAAVFW, and IGQAMMAAGMAMLFFAMLFPV.

Its subcellular location is the cell membrane. This is an uncharacterized protein from Mycobacterium bovis (strain ATCC BAA-935 / AF2122/97).